Reading from the N-terminus, the 541-residue chain is Valine N-monooxygenase 2 (541 aa).

Residues methionine 1–threonine 18 lie on the Cytoplasmic side of the membrane. Residues serine 19–isoleucine 41 form a helical membrane-spanning segment. The Lumenal segment spans residues lysine 42 to proline 541. Asparagine 277 carries an N-linked (GlcNAc...) asparagine glycan. Cysteine 477 lines the heme pocket. N-linked (GlcNAc...) asparagine glycosylation is present at asparagine 505.

This sequence belongs to the cytochrome P450 family. Heme is required as a cofactor. As to expression, expressed in the epidermis, the next two cortex cell layers, the endodermis and the pericycle of leaf petioles. Strong expression around the laticifers among the phloem cells and in parenchymatic cells between the protoxylem and the metaxylem cells. In the leaves, preferentially expressed in the mesophyll cells adjacent to the epidermis.

Its subcellular location is the microsome membrane. The enzyme catalyses L-valine + 2 reduced [NADPH--hemoprotein reductase] + 2 O2 = (E)-2-methylpropanal oxime + 2 oxidized [NADPH--hemoprotein reductase] + CO2 + 3 H2O + 2 H(+). It catalyses the reaction L-valine + reduced [NADPH--hemoprotein reductase] + O2 = N-hydroxy-L-valine + oxidized [NADPH--hemoprotein reductase] + H2O + 2 H(+). The catalysed reaction is N-hydroxy-L-valine + reduced [NADPH--hemoprotein reductase] + O2 = N,N-dihydroxy-L-valine + oxidized [NADPH--hemoprotein reductase] + H2O + H(+). It carries out the reaction L-isoleucine + 2 reduced [NADPH--hemoprotein reductase] + 2 O2 = (1E,2S)-2-methylbutanal oxime + 2 oxidized [NADPH--hemoprotein reductase] + CO2 + 3 H2O + 2 H(+). The enzyme catalyses L-isoleucine + reduced [NADPH--hemoprotein reductase] + O2 = N-hydroxy-L-isoleucine + oxidized [NADPH--hemoprotein reductase] + H2O + 2 H(+). It catalyses the reaction N-hydroxy-L-isoleucine + reduced [NADPH--hemoprotein reductase] + O2 = N,N-dihydroxy-L-isoleucine + oxidized [NADPH--hemoprotein reductase] + H2O + H(+). Its function is as follows. Involved in the biosynthesis of the cyanogenic glucosides linamarin and lotaustralin. Can use L-valine or L-isoleucine as substrate. Catalyzes multi-step reactions starting with two successive N-hydroxylations using L-valine and L-isoleucine as substrates leading to the formation of N,N-dihydroxy-L-valine and N,N-dihydroxy-L-isoleucine, respectively; following spontaneous reactions lead to the production of (E)-2-methylpropanal oxime and (1E,2S)-2-methylbutanal oxime, respectively. This chain is Valine N-monooxygenase 2, found in Manihot esculenta (Cassava).